The primary structure comprises 355 residues: Vacuolar protein sorting-associated protein 37C (355 aa).

Residue S29 is modified to Phosphoserine. In terms of domain architecture, VPS37 C-terminal spans V78–A167. Residues K159–Y355 are disordered. Composition is skewed to pro residues over residues A170–T186 and P194–L205. Low complexity predominate over residues P246–G257. The span at P321–Y355 shows a compositional bias: pro residues.

Belongs to the VPS37 family. In terms of assembly, component of the ESCRT-I complex (endosomal sorting complex required for transport I) which consists of TSG101, VPS28, a VPS37 protein (VPS37A to -D) and MVB12A or MVB12B in a 1:1:1:1 stoichiometry. Interacts with TSG101, VPS28, MVB12A and MVB12B. Component of the ESCRT-I complex (endosomal sorting complex required for transport I) which consists of TSG101, VPS28, a VPS37 protein (VPS37A to -D) and UBAP1 in a 1:1:1:1 stoichiometry. Interacts with HGS and STAM2. Interacts with CEP55. Post-translationally, phosphorylated by TBK1.

The protein resides in the late endosome membrane. Functionally, component of the ESCRT-I complex, a regulator of vesicular trafficking process. Required for the sorting of endocytic ubiquitinated cargos into multivesicular bodies. May be involved in cell growth and differentiation. This chain is Vacuolar protein sorting-associated protein 37C (VPS37C), found in Pongo abelii (Sumatran orangutan).